The chain runs to 140 residues: MMSLLSLLLLGIALPATQAIDYRKCQASQILKEHGMDKVIPLPELVCTMFHISGLSTQAEVNNHSNKEYGIFQISNNGWCAEKQEDVANSVCGILCSKFLDDDITDDIECAKKILQLPEGLGYWKAHETFCIEDLDQWRC.

The signal sequence occupies residues 1 to 19 (MMSLLSLLLLGIALPATQA). The region spanning 20–140 (IDYRKCQASQ…CIEDLDQWRC (121 aa)) is the C-type lysozyme domain. Intrachain disulfides connect cysteine 25–cysteine 140, cysteine 47–cysteine 131, cysteine 80–cysteine 96, and cysteine 92–cysteine 110. N-linked (GlcNAc...) asparagine glycosylation is present at asparagine 63. Residues lysine 98, aspartate 101, aspartate 103, aspartate 106, and aspartate 107 each coordinate Ca(2+).

This sequence belongs to the glycosyl hydrolase 22 family. Lactose synthase (LS) is a heterodimer of a catalytic component, beta1,4-galactosyltransferase (beta4Gal-T1) and a regulatory component, alpha-lactalbumin (LA). Mammary gland specific. Secreted in milk.

It localises to the secreted. Regulatory subunit of lactose synthase, changes the substrate specificity of galactosyltransferase in the mammary gland making glucose a good acceptor substrate for this enzyme. This enables LS to synthesize lactose, the major carbohydrate component of milk. In other tissues, galactosyltransferase transfers galactose onto the N-acetylglucosamine of the oligosaccharide chains in glycoproteins. The sequence is that of Alpha-lactalbumin (LALBA) from Notamacropus eugenii (Tammar wallaby).